We begin with the raw amino-acid sequence, 642 residues long: Palmitoyltransferase akr1 (642 aa).

ANK repeat units lie at residues 1-29, 33-62, 67-96, 100-129, 133-162, and 166-196; these read MGSLFLAASQGELDTVKNLISSEKIDVNA, GGATALHWAALNQQIPICKFLLEHGADVNA, LQAAPIHWAAKRGSVKTVHYLVQHGADPLL, QGFNCLHLAVHAASPLLVVYLLHLDISVDL, QQHTPLMWASYHGNEPITNCLLRWGADVLA, and DKMTPLHWSIVGGNLKCMKLILKEGGIPCTA. Residues 1–256 lie on the Cytoplasmic side of the membrane; that stretch reads MGSLFLAASQ…SKFQFSQKTF (256 aa). A run of 2 helical transmembrane segments spans residues 257–277 and 278–298; these read IIFCFLSSFIITGVFFFIMSI and CPMVISLIIAPLWIYFTFKYI. At 299-316 the chain is on the cytoplasmic side; that stretch reads TTCIHANIDIVHFYLETP. Residues 317-337 traverse the membrane as a helical segment; the sequence is FLAGIFSSIFFWVWCHSLLYI. Residues 338–343 are Lumenal-facing; that stretch reads VPKTLP. The chain crosses the membrane as a helical span at residues 344 to 364; sequence IKPLSSLLFVLISFTCIGLYV. The Cytoplasmic segment spans residues 365–444; the sequence is RTAFQNPGYV…NCVGARNHRT (80 aa). The DHHC domain maps to 400–450; it reads HYCLKCFQVKPPRSYHCGACKRCINRYDHHCPWTGNCVGARNHRTFLLFVF. Catalysis depends on cysteine 430, which acts as the S-palmitoyl cysteine intermediate. A helical transmembrane segment spans residues 445 to 465; that stretch reads FLLFVFTLSTLIPIYFYVAFY. Over 466 to 496 the chain is Lumenal; that stretch reads YLQNIPIQKKYESYRCLFISGTICQWSLKDM. The helical transmembrane segment at 497–517 threads the bilayer; the sequence is FVLVASLTLFVNWCWVVVLAF. Residues 518-642 lie on the Cytoplasmic side of the membrane; the sequence is TQICQVAHNV…GRQDEATRHV (125 aa).

It belongs to the DHHC palmitoyltransferase family. AKR/ZDHHC17 subfamily.

It is found in the early endosome membrane. The protein localises to the golgi apparatus membrane. It catalyses the reaction L-cysteinyl-[protein] + hexadecanoyl-CoA = S-hexadecanoyl-L-cysteinyl-[protein] + CoA. Functionally, palmitoyltransferase specific for casein kinase 1. In Schizosaccharomyces pombe (strain 972 / ATCC 24843) (Fission yeast), this protein is Palmitoyltransferase akr1 (akr1).